A 101-amino-acid chain; its full sequence is Large ribosomal subunit protein eL30 (101 aa).

It belongs to the eukaryotic ribosomal protein eL30 family.

The polypeptide is Large ribosomal subunit protein eL30 (Pyrobaculum islandicum (strain DSM 4184 / JCM 9189 / GEO3)).